Reading from the N-terminus, the 440-residue chain is Chromosome partition protein MukF (440 aa).

Residues 208–236 (LSETSGTLRELQDTLEAAGDKLQANLLRI) form a leucine-zipper region.

It belongs to the MukF family. In terms of assembly, interacts, and probably forms a ternary complex, with MukE and MukB via its C-terminal region. The complex formation is stimulated by calcium or magnesium. It is required for an interaction between MukE and MukB.

The protein localises to the cytoplasm. It is found in the nucleoid. Functionally, involved in chromosome condensation, segregation and cell cycle progression. May participate in facilitating chromosome segregation by condensation DNA from both sides of a centrally located replisome during cell division. Not required for mini-F plasmid partitioning. Probably acts via its interaction with MukB and MukE. Overexpression results in anucleate cells. It has a calcium binding activity. The polypeptide is Chromosome partition protein MukF (Photorhabdus laumondii subsp. laumondii (strain DSM 15139 / CIP 105565 / TT01) (Photorhabdus luminescens subsp. laumondii)).